Here is a 757-residue protein sequence, read N- to C-terminus: Mitofusin-2 (757 aa).

Residues 1-604 (MSLLFSRCNS…TQEEFMVSMV (604 aa)) are Cytoplasmic-facing. The segment at 30-94 (KHFVTAKKKI…VRGISEVLAR (65 aa)) is part of a helix bundle domain, formed by helices from N-terminal and C-terminal regions. The Dynamin-type G domain occupies 93–342 (ARRHMKVAFF…VRMFEFQNFE (250 aa)). Residues 103-110 (GRTSNGKS) form a G1 motif region. 106–111 (SNGKST) contributes to the GTP binding site. The residue at position 111 (Thr-111) is a Phosphothreonine; by PINK1. The interval 129-130 (TT) is G2 motif. The G3 motif stretch occupies residues 199–202 (DSPG). 258-261 (NRWD) contributes to the GTP binding site. The tract at residues 258-261 (NRWD) is G4 motif. A region of interest (G5 motif) is located at residue Glu-288. Residues Ser-305 and Lys-307 each coordinate GTP. Positions 359–385 (EQHTVRAKQIAEAVRLIMDSLHMAARE) are part of a helix bundle domain, formed by helices from N-terminal and C-terminal regions. The stretch at 391 to 434 (EEMREERQDRLKFIDKQLELLAQDYKLRIKQITEEVERQVSTAM) forms a coiled coil. Ser-442 carries the phosphoserine; by PINK1 modification. A helical transmembrane segment spans residues 605–625 (TGLASLTSRTSMGILVVGGVV). A topological domain (mitochondrial intermembrane) is located at residue Trp-626. The helical transmembrane segment at 627 to 647 (KAVGWRLIALSFGLYGLLYVY) threads the bilayer. The Cytoplasmic portion of the chain corresponds to 648–757 (ERLTWTTKAK…FTHQYLQPSR (110 aa)). Positions 695-738 (TFAHLCQQVDVTRENLEQEIAAMNKKIEVLDSLQSKAKLLRNKA) form a coiled coil. Residues 722 to 753 (EVLDSLQSKAKLLRNKAGWLDSELNMFTHQYL) are part of a helix bundle domain, formed by helices from N-terminal and C-terminal regions.

Belongs to the TRAFAC class dynamin-like GTPase superfamily. Dynamin/Fzo/YdjA family. Mitofusin subfamily. Forms homomultimers and heteromultimers with MFN1. Oligomerization is essential for mitochondrion fusion. Interacts with VAT1. Interacts with STOML2; may form heterooligomers. Interacts (phosphorylated) with PRKN. Interacts with EIF2AK3. Interacts with THG1L; THG1L probably functions as a guanyl-nucleotide exchange factor/GEF, activating MFN2. Post-translationally, phosphorylated by PINK1. In terms of processing, ubiquitinated by non-degradative ubiquitin by PRKN, promoting mitochondrial fusion; deubiquitination by USP30 inhibits mitochondrial fusion. Ubiquitinated by HUWE1 when dietary stearate (C18:0) levels are low; ubiquitination inhibits mitochondrial fusion. Ubiquitous; expressed at low level. Highly expressed in heart and kidney.

The protein localises to the mitochondrion outer membrane. The catalysed reaction is GTP + H2O = GDP + phosphate + H(+). Mitochondrial outer membrane GTPase that mediates mitochondrial clustering and fusion. Mitochondria are highly dynamic organelles, and their morphology is determined by the equilibrium between mitochondrial fusion and fission events. Overexpression induces the formation of mitochondrial networks. Membrane clustering requires GTPase activity and may involve a major rearrangement of the coiled coil domains. Plays a central role in mitochondrial metabolism and may be associated with obesity and/or apoptosis processes. Plays an important role in the regulation of vascular smooth muscle cell proliferation. Involved in the clearance of damaged mitochondria via selective autophagy (mitophagy). Is required for PRKN recruitment to dysfunctional mitochondria. Involved in the control of unfolded protein response (UPR) upon ER stress including activation of apoptosis and autophagy during ER stress. Acts as an upstream regulator of EIF2AK3 and suppresses EIF2AK3 activation under basal conditions. This is Mitofusin-2 from Homo sapiens (Human).